The primary structure comprises 287 residues: Anthocyanidin 3-O-glucosyltransferase 7 (287 aa).

Residues Ala162, Gln164, His179, Trp182, Asn183, Ser184, and Glu187 each contribute to the UDP-alpha-D-glucose site. Gly202 is an an anthocyanidin binding site. UDP-alpha-D-glucose is bound by residues Asp203 and Gln204.

This sequence belongs to the UDP-glycosyltransferase family. In terms of tissue distribution, expressed in cotyledons, hypocotyls, roots and leaves.

The catalysed reaction is an anthocyanidin + UDP-alpha-D-glucose + H(+) = an anthocyanidin 3-O-beta-D-glucoside + UDP. It participates in pigment biosynthesis; anthocyanin biosynthesis. In terms of biological role, in the presence of other necessary color factors, this glycosylation reaction allows the accumulation of anthocyanin pigments. The chain is Anthocyanidin 3-O-glucosyltransferase 7 (GT7) from Manihot esculenta (Cassava).